The following is a 106-amino-acid chain: YcgL domain-containing protein PsycPRwf_1721 (106 aa).

The YcgL domain maps to 1–94 (MHCDIYKFPK…PSDVLLAQAQ (94 aa)).

This is YcgL domain-containing protein PsycPRwf_1721 from Psychrobacter sp. (strain PRwf-1).